Here is a 1415-residue protein sequence, read N- to C-terminus: Zygote defective protein 9 (1415 aa).

TOG regions lie at residues 1–250 and 251–530; these read MSNW…AKNA and PPVA…AGPA. Residues 21 to 48 are a coiled coil; sequence DELRESKKWQERKEALEALLKVLTDNER. HEAT repeat units lie at residues 30–68, 95–132, 135–172, and 179–217; these read QERKEALEALLKVLTDNERLSTKASYAELIGHLQMVLAK, SFAGPLLPVIFEKMKEKKPMLREPLVDCSNEVGRTMQS, TGQEDILAALAKPNPQIKQQTALFVARQLDLVVPAKQP, and VVPVFGKLTGDADQDVREASLQGLGAVQRIIGDKNVKNL. Residues 243 to 278 form a disordered region; the sequence is AEEQAKNAPPVAPTSSTPSASAASGDPSGGTATAVV. Low complexity predominate over residues 255–276; it reads PTSSTPSASAASGDPSGGTATA. 4 HEAT repeats span residues 339–377, 381–418, 420–457, and 464–502; these read ANYGALVERLQKVLEKDANINVAALAANCITGIANGLRT, PFAVSVTPIIFEKFKEKKPTLRDPLVACIDAVVATTNL, AVGEIVLAALGKPNPSIKTQTDLFLQRCFMKLNSQTMP, and LIPSLIKHSGDSDSEVREASYAAMGAMMRAIGEKPSLQL. Residues 544–603 are disordered; it reads APPAAAPPKKTAPPKKQPEDEEVVEEEDEPLKPPPGDKKKKVPVKENEENEPPVVAPKAE. Residues 562–572 are compositionally biased toward acidic residues; that stretch reads EDEEVVEEEDE. The TOG 3 stretch occupies residues 602 to 867; it reads AELLLSDNED…VEERIKRTGV (266 aa). HEAT repeat units follow at residues 706-743, 764-801, and 804-841; these read IKVLELCKVIVELIRDTETPMSQEEVSAFVPYLLLKTG, VGPLKMTPMLLDALKSKNARQRSECLLVIEYYITNAGI, and LKSLSVEKTVAPFVGDKDVNVRNAAINVLVACFKFEGD. Residues 867–914 are disordered; the sequence is VKPGSGVVTSPPTGGPKILVPQQQGSVVRRPASRSRTREPEPEEVQSD.

The protein belongs to the TOG/XMAP215 family. Interacts with tac-1 to form a heterodimer.

It is found in the cytoplasm. The protein localises to the cytoskeleton. Its subcellular location is the spindle pole. It localises to the microtubule organizing center. The protein resides in the centrosome. In terms of biological role, plays a major role in organizing microtubules and spindle poles during mitosis and meiosis in one-cell stage embryos. Required for default nucleus positioning in oocytes. This is Zygote defective protein 9 from Caenorhabditis elegans.